We begin with the raw amino-acid sequence, 879 residues long: Alanine--tRNA ligase (879 aa).

Zn(2+)-binding residues include His566, His570, Cys668, and His672.

The protein belongs to the class-II aminoacyl-tRNA synthetase family. Zn(2+) serves as cofactor.

It localises to the cytoplasm. The enzyme catalyses tRNA(Ala) + L-alanine + ATP = L-alanyl-tRNA(Ala) + AMP + diphosphate. Catalyzes the attachment of alanine to tRNA(Ala) in a two-step reaction: alanine is first activated by ATP to form Ala-AMP and then transferred to the acceptor end of tRNA(Ala). Also edits incorrectly charged Ser-tRNA(Ala) and Gly-tRNA(Ala) via its editing domain. This Listeria monocytogenes serotype 4b (strain F2365) protein is Alanine--tRNA ligase.